A 134-amino-acid polypeptide reads, in one-letter code: MARVKRGVTAHAKHKKVLDQAAGFRGRRKNTIRTAKAAVDRSKQYAYRDRKNRKRSFRALWIQRINAAVREQGLTYGRFIDGLAKAGIEIDRKVLSDIAIHEPEAFAALVASAKKALEYLKNTSMPNAFEGAVR.

It belongs to the bacterial ribosomal protein bL20 family.

Binds directly to 23S ribosomal RNA and is necessary for the in vitro assembly process of the 50S ribosomal subunit. It is not involved in the protein synthesizing functions of that subunit. This Brucella abortus (strain S19) protein is Large ribosomal subunit protein bL20.